Consider the following 154-residue polypeptide: Transcription antitermination protein NusB (154 aa).

It belongs to the NusB family.

In terms of biological role, involved in transcription antitermination. Required for transcription of ribosomal RNA (rRNA) genes. Binds specifically to the boxA antiterminator sequence of the ribosomal RNA (rrn) operons. The polypeptide is Transcription antitermination protein NusB (Bordetella parapertussis (strain 12822 / ATCC BAA-587 / NCTC 13253)).